A 420-amino-acid chain; its full sequence is MAP kinase-interacting serine/threonine-protein kinase 1 (420 aa).

The segment at Met-1–Thr-25 is disordered. Ser-27 bears the Phosphoserine; by PAK2 mark. The 285-residue stretch at Lys-37–Val-321 folds into the Protein kinase domain. ATP is bound by residues Leu-43–Val-51 and Lys-66. Catalysis depends on Asp-158, which acts as the Proton acceptor. Phosphoserine is present on residues Ser-168 and Ser-173. 3 positions are modified to phosphothreonine: Thr-197, Thr-202, and Thr-332. A disordered region spans residues Leu-386–Pro-420. Residues Leu-400 to Ala-409 are compositionally biased toward low complexity. The span at Pro-410–Pro-420 shows a compositional bias: pro residues.

This sequence belongs to the protein kinase superfamily. CAMK Ser/Thr protein kinase family. Interacts with the C-terminal regions of EIF4G1 and EIF4G2. Also binds to dephosphorylated ERK1 and ERK2, and to the p38 kinases. The cofactor is Mg(2+). In terms of processing, dual phosphorylation of Thr-197 and Thr-202 activates the kinase. Phosphorylation of Thr-332 activates the kinase. MAPK3/ERK1 is one of the kinases which activate MKNK1/MNK1. Phosphorylation by PAK2 leads to a reduced phosphorylation of EIF4G1.

It catalyses the reaction L-seryl-[protein] + ATP = O-phospho-L-seryl-[protein] + ADP + H(+). The enzyme catalyses L-threonyl-[protein] + ATP = O-phospho-L-threonyl-[protein] + ADP + H(+). Phosphorylated and activated by the p38 kinases and kinases in the Erk pathway. In terms of biological role, may play a role in the response to environmental stress and cytokines. Appears to regulate translation by phosphorylating EIF4E, thus increasing the affinity of this protein for the 7-methylguanosine-containing mRNA cap. This is MAP kinase-interacting serine/threonine-protein kinase 1 (MKNK1) from Bos taurus (Bovine).